Here is a 354-residue protein sequence, read N- to C-terminus: tRNA N6-adenosine threonylcarbamoyltransferase (354 aa).

Fe cation is bound by residues histidine 111 and histidine 115. Substrate-binding positions include 134–138, aspartate 167, glycine 180, and asparagine 279; that span reads LVSGG. Aspartate 319 contributes to the Fe cation binding site.

Belongs to the KAE1 / TsaD family. It depends on Fe(2+) as a cofactor.

The protein localises to the cytoplasm. The enzyme catalyses L-threonylcarbamoyladenylate + adenosine(37) in tRNA = N(6)-L-threonylcarbamoyladenosine(37) in tRNA + AMP + H(+). Required for the formation of a threonylcarbamoyl group on adenosine at position 37 (t(6)A37) in tRNAs that read codons beginning with adenine. Is involved in the transfer of the threonylcarbamoyl moiety of threonylcarbamoyl-AMP (TC-AMP) to the N6 group of A37, together with TsaE and TsaB. TsaD likely plays a direct catalytic role in this reaction. The sequence is that of tRNA N6-adenosine threonylcarbamoyltransferase from Neisseria meningitidis serogroup A / serotype 4A (strain DSM 15465 / Z2491).